We begin with the raw amino-acid sequence, 127 residues long: MTWAPTGPTNVELRKLIRDLKKAACEYNAPVWRDVAERLSRPRRQRAEVNVGKLDGLARRGVIQEEETVLVPGKVLGDGVITQPLRVAAWRFSRTARMKIEAAGGECLTIRELLEENPEGSYIRIIE.

The protein belongs to the eukaryotic ribosomal protein eL18 family.

The chain is Large ribosomal subunit protein eL18 from Methanopyrus kandleri (strain AV19 / DSM 6324 / JCM 9639 / NBRC 100938).